Here is a 614-residue protein sequence, read N- to C-terminus: Zinc metalloproteinase-disintegrin-like BmMP (614 aa).

A signal peptide spans 1–20; that stretch reads MIQALLVTICLAVFPYQGSS. The propeptide occupies 21–188; that stretch reads IILESGNVND…WESDEPIRNA (168 aa). Asn187 carries N-linked (GlcNAc...) asparagine glycosylation. Residues 205–401 enclose the Peptidase M12B domain; it reads KYIEFYVAVD…DRPQCILNKP (197 aa). 17 disulfides stabilise this stretch: Cys316–Cys396, Cys356–Cys380, Cys359–Cys364, Cys412–Cys441, Cys423–Cys436, Cys425–Cys431, Cys435–Cys458, Cys449–Cys455, Cys454–Cys480, Cys467–Cys487, Cys474–Cys506, Cys499–Cys511, Cys518–Cys568, Cys533–Cys576, Cys546–Cys556, Cys563–Cys602, and Cys596–Cys607. Position 341 (His341) interacts with Zn(2+). Glu342 is a catalytic residue. Residues His345 and His351 each contribute to the Zn(2+) site. A Disintegrin domain is found at 409-495; it reads PAICGNYFVE…ECPTDIFRRN (87 aa). The D/ECD-tripeptide signature appears at 473–475; the sequence is DCD.

This sequence belongs to the venom metalloproteinase (M12B) family. P-III subfamily. P-IIIa sub-subfamily. Monomer. Zn(2+) is required as a cofactor. In terms of tissue distribution, expressed by the venom gland.

It is found in the secreted. Its function is as follows. Snake venom zinc metalloproteinase that inhibits platelet aggregation and degrades fibrinogen. This Bungarus multicinctus (Many-banded krait) protein is Zinc metalloproteinase-disintegrin-like BmMP.